The sequence spans 647 residues: Threonine--tRNA ligase (647 aa).

Residues 1–61 (MIKITFPDGA…EEDGSIEIVT (61 aa)) form the TGS domain. Residues 240 to 538 (DHRKLGKELD…LIETYKGAFP (299 aa)) are catalytic. The Zn(2+) site is built by C334, H385, and H515.

The protein belongs to the class-II aminoacyl-tRNA synthetase family. Homodimer. Zn(2+) is required as a cofactor.

Its subcellular location is the cytoplasm. The enzyme catalyses tRNA(Thr) + L-threonine + ATP = L-threonyl-tRNA(Thr) + AMP + diphosphate + H(+). Its function is as follows. Catalyzes the attachment of threonine to tRNA(Thr) in a two-step reaction: L-threonine is first activated by ATP to form Thr-AMP and then transferred to the acceptor end of tRNA(Thr). Also edits incorrectly charged L-seryl-tRNA(Thr). This Streptococcus pyogenes serotype M2 (strain MGAS10270) protein is Threonine--tRNA ligase.